A 240-amino-acid polypeptide reads, in one-letter code: Purine nucleoside phosphorylase DeoD-type (240 aa).

His-5 is a binding site for a purine D-ribonucleoside. Phosphate is bound by residues Gly-21, Arg-25, Arg-44, and 88–91 (RVGS). A purine D-ribonucleoside contacts are provided by residues 181-183 (EME) and 205-206 (SD). Asp-206 functions as the Proton donor in the catalytic mechanism.

Belongs to the PNP/UDP phosphorylase family. As to quaternary structure, homohexamer; trimer of homodimers.

The enzyme catalyses a purine D-ribonucleoside + phosphate = a purine nucleobase + alpha-D-ribose 1-phosphate. It catalyses the reaction a purine 2'-deoxy-D-ribonucleoside + phosphate = a purine nucleobase + 2-deoxy-alpha-D-ribose 1-phosphate. Functionally, catalyzes the reversible phosphorolytic breakdown of the N-glycosidic bond in the beta-(deoxy)ribonucleoside molecules, with the formation of the corresponding free purine bases and pentose-1-phosphate. The protein is Purine nucleoside phosphorylase DeoD-type of Enterobacter sp. (strain 638).